A 168-amino-acid polypeptide reads, in one-letter code: SsrA-binding protein (168 aa).

Belongs to the SmpB family.

Its subcellular location is the cytoplasm. In terms of biological role, required for rescue of stalled ribosomes mediated by trans-translation. Binds to transfer-messenger RNA (tmRNA), required for stable association of tmRNA with ribosomes. tmRNA and SmpB together mimic tRNA shape, replacing the anticodon stem-loop with SmpB. tmRNA is encoded by the ssrA gene; the 2 termini fold to resemble tRNA(Ala) and it encodes a 'tag peptide', a short internal open reading frame. During trans-translation Ala-aminoacylated tmRNA acts like a tRNA, entering the A-site of stalled ribosomes, displacing the stalled mRNA. The ribosome then switches to translate the ORF on the tmRNA; the nascent peptide is terminated with the 'tag peptide' encoded by the tmRNA and targeted for degradation. The ribosome is freed to recommence translation, which seems to be the essential function of trans-translation. The chain is SsrA-binding protein from Mycobacterium sp. (strain JLS).